The primary structure comprises 345 residues: UDP-3-O-acylglucosamine N-acyltransferase (345 aa).

The active-site Proton acceptor is the histidine 248.

This sequence belongs to the transferase hexapeptide repeat family. LpxD subfamily. In terms of assembly, homotrimer.

The catalysed reaction is a UDP-3-O-[(3R)-3-hydroxyacyl]-alpha-D-glucosamine + a (3R)-hydroxyacyl-[ACP] = a UDP-2-N,3-O-bis[(3R)-3-hydroxyacyl]-alpha-D-glucosamine + holo-[ACP] + H(+). It participates in bacterial outer membrane biogenesis; LPS lipid A biosynthesis. In terms of biological role, catalyzes the N-acylation of UDP-3-O-acylglucosamine using 3-hydroxyacyl-ACP as the acyl donor. Is involved in the biosynthesis of lipid A, a phosphorylated glycolipid that anchors the lipopolysaccharide to the outer membrane of the cell. The protein is UDP-3-O-acylglucosamine N-acyltransferase of Prochlorococcus marinus (strain SARG / CCMP1375 / SS120).